Consider the following 289-residue polypeptide: F-box protein PP2-A11 (289 aa).

Residues 23-69 (QPGLGDLPESCVALILQNLDPVEICRFSKLNTAFHGASWADFVWESK) form the F-box domain.

As to quaternary structure, part of a SCF (ASK-cullin-F-box) protein ligase complex. Interacts with SKP1A/ASK1.

It is found in the nucleus. Its pathway is protein modification; protein ubiquitination. Functionally, component of SCF(ASK-cullin-F-box) E3 ubiquitin ligase complexes, which may mediate the ubiquitination and subsequent proteasomal degradation of target proteins. The polypeptide is F-box protein PP2-A11 (PP2A11) (Arabidopsis thaliana (Mouse-ear cress)).